Here is a 267-residue protein sequence, read N- to C-terminus: Undecaprenyl-diphosphatase (267 aa).

Helical transmembrane passes span 1–21 (MPLLQLILVALIQGVTEFLPV), 40–60 (GQAIDVAVHVGTLAAVVLFFW), 85–105 (LALGLIVATIPTVIFGTFLYF), 112–132 (LRSVAVIGWTMLVFGVVLYIA), 188–208 (IAMLMSIPTIIASGVLLGTEV), 219–239 (DMGIAALLAMASALAALALMM), and 245–265 (VSFTPYVIYRVALGMVLLFIA).

This sequence belongs to the UppP family.

The protein resides in the cell inner membrane. It catalyses the reaction di-trans,octa-cis-undecaprenyl diphosphate + H2O = di-trans,octa-cis-undecaprenyl phosphate + phosphate + H(+). Functionally, catalyzes the dephosphorylation of undecaprenyl diphosphate (UPP). Confers resistance to bacitracin. The polypeptide is Undecaprenyl-diphosphatase (Ruegeria sp. (strain TM1040) (Silicibacter sp.)).